Reading from the N-terminus, the 330-residue chain is AA9 family lytic polysaccharide monooxygenase E (330 aa).

A signal peptide spans 1–20 (MRSTLVTGLIAGLLSQQAAA). 2 residues coordinate Cu(2+): His-21 and His-99. The cysteines at positions 58 and 193 are disulfide-linked. O2-binding residues include His-179 and Gln-188. Tyr-190 lines the Cu(2+) pocket. Positions 293-330 (CSVAKYQQCGGTGYTGCTSCASGSTCSAVSPPYYSQCV) constitute a CBM1 domain.

It belongs to the polysaccharide monooxygenase AA9 family. Requires Cu(2+) as cofactor.

It is found in the secreted. The catalysed reaction is [(1-&gt;4)-beta-D-glucosyl]n+m + reduced acceptor + O2 = 4-dehydro-beta-D-glucosyl-[(1-&gt;4)-beta-D-glucosyl]n-1 + [(1-&gt;4)-beta-D-glucosyl]m + acceptor + H2O.. Its function is as follows. Lytic polysaccharide monooxygenase (LPMO) that depolymerizes crystalline and amorphous polysaccharides via the oxidation of scissile alpha- or beta-(1-4)-glycosidic bonds, yielding exclusively C1 oxidation products. Catalysis by LPMOs requires the reduction of the active-site copper from Cu(II) to Cu(I) by a reducing agent and H(2)O(2) or O(2) as a cosubstrate. This Neurospora crassa (strain ATCC 24698 / 74-OR23-1A / CBS 708.71 / DSM 1257 / FGSC 987) protein is AA9 family lytic polysaccharide monooxygenase E (gh61-5).